A 277-amino-acid polypeptide reads, in one-letter code: Putative phosphoenolpyruvate synthase regulatory protein (277 aa).

Glycine 157 to threonine 164 contacts ADP.

It belongs to the pyruvate, phosphate/water dikinase regulatory protein family. PSRP subfamily.

The catalysed reaction is [pyruvate, water dikinase] + ADP = [pyruvate, water dikinase]-phosphate + AMP + H(+). The enzyme catalyses [pyruvate, water dikinase]-phosphate + phosphate + H(+) = [pyruvate, water dikinase] + diphosphate. Functionally, bifunctional serine/threonine kinase and phosphorylase involved in the regulation of the phosphoenolpyruvate synthase (PEPS) by catalyzing its phosphorylation/dephosphorylation. In Cronobacter sakazakii (strain ATCC BAA-894) (Enterobacter sakazakii), this protein is Putative phosphoenolpyruvate synthase regulatory protein.